The primary structure comprises 114 residues: Photosystem II reaction center Psb28 protein (114 aa).

Belongs to the Psb28 family. As to quaternary structure, part of the photosystem II complex.

The protein localises to the plastid. It is found in the chloroplast thylakoid membrane. This chain is Photosystem II reaction center Psb28 protein, found in Gracilaria tenuistipitata var. liui (Red alga).